We begin with the raw amino-acid sequence, 1215 residues long: Cellulose synthase-like protein D4 (1215 aa).

Disordered stretches follow at residues 24–46 (GGDA…SLGS) and 206–231 (SDTD…ERDQ). Positions 207–222 (DTDESDSVTDDDDDEA) are enriched in acidic residues. Helical transmembrane passes span 321-341 (AILS…GFFL) and 352-372 (AVWL…SWLL). Active-site residues include Asp-452 and Asp-905. Helical transmembrane passes span 988-1008 (VFLL…KFIV), 1014-1034 (TFLA…LLEI), 1060-1080 (PAAV…SFTL), 1114-1134 (LMVP…VAAA), 1147-1167 (LLGG…FAKG), and 1177-1197 (TIVF…WVYI).

It belongs to the glycosyltransferase 2 family. Plant cellulose synthase-like D subfamily.

The protein resides in the golgi apparatus membrane. Its function is as follows. Thought to be a Golgi-localized beta-glycan synthase that polymerize the backbones of noncellulosic polysaccharides (hemicelluloses) of plant cell wall. The chain is Cellulose synthase-like protein D4 (CSLD4) from Oryza sativa subsp. japonica (Rice).